The following is a 762-amino-acid chain: Putative cation exchanger YDL206W (762 aa).

The N-terminal stretch at 1 to 26 (MHKPLRWLITIAFYVSNVILIGYSLS) is a signal peptide. At 27 to 30 (SNGS) the chain is on the extracellular side. N28 carries an N-linked (GlcNAc...) asparagine glycan. A helical membrane pass occupies residues 31-51 (ISEFYLHSVVLIECFSLLGVV). Residues 52–102 (TSDCLTPSLSYISSNIFHISDRVSGMTLLALGNALPDITSTYQSMKSGVTS) lie on the Cytoplasmic side of the membrane. The chain crosses the membrane as a helical span at residues 103 to 123 (LAIGELFGGIFFLLTVVIGLM). Residues 124 to 156 (GCVATIQFQHDKSIETYTEESFDQNLSYDRSNY) are Extracellular-facing. N-linked (GlcNAc...) asparagine glycosylation is present at N148. Residues 157–177 (ILDVGIFTFMLLVSGTFLADG) form a helical membrane-spanning segment. Position 178 (R178) is a topological domain, cytoplasmic. The helical transmembrane segment at 179 to 199 (LYFWECIVMVLTYCCCAVYLI) threads the bilayer. Over 200 to 501 (KSYKYPCEIN…YNYLTDVSLE (302 aa)) the chain is Extracellular. 2 N-linked (GlcNAc...) asparagine glycosylation sites follow: N280 and N329. A helical transmembrane segment spans residues 502–522 (IGFFEFLSLLVTTPVSIILYL). Residues 523–554 (SIPSEISQTDHDLPLSYLQNIQLIASPIILNQ) lie on the Cytoplasmic side of the membrane. The helical transmembrane segment at 555–575 (LITNNFSFWLLILSLVIAILL) threads the bilayer. The Extracellular portion of the chain corresponds to 576-589 (YFKTRTIPNKFNSD). The chain crosses the membrane as a helical span at residues 590 to 610 (IIFTVAFLLSLACLSKAVHII). Residues 611 to 615 (VVTLT) lie on the Cytoplasmic side of the membrane. The chain crosses the membrane as a helical span at residues 616–636 (HWINVFNISETILGLTIFTWG). The Extracellular segment spans residues 637-650 (NSIGDLVSNITFVK). A glycan (N-linked (GlcNAc...) asparagine) is linked at N645. A helical membrane pass occupies residues 651-671 (IGVLEIAIGACFGSPLLYFLF). At 672–709 (GVGFDGIMIMLGDKTGKIVSGRDSNILMHHIDFKVDKN) the chain is on the cytoplasmic side. The helical transmembrane segment at 710-730 (LINTGVGILIAFLIFTVLIPL) threads the bilayer. The Extracellular portion of the chain corresponds to 731–738 (NDWKIDKK). A helical transmembrane segment spans residues 739–759 (ISIALLTLYIVVTCISVFLEV). Residues 760–762 (HQV) are Cytoplasmic-facing.

Belongs to the Ca(2+):cation antiporter (CaCA) (TC 2.A.19) family.

It localises to the membrane. Functionally, putative cation exchanger. This is Putative cation exchanger YDL206W from Saccharomyces cerevisiae (strain ATCC 204508 / S288c) (Baker's yeast).